A 611-amino-acid polypeptide reads, in one-letter code: Chaperone protein DnaK (611 aa).

The residue at position 173 (threonine 173) is a Phosphothreonine; by autocatalysis. Positions 577–591 (AAAAQAAQGGEADAG) are enriched in low complexity. The segment at 577 to 611 (AAAAQAAQGGEADAGAGKKDDGVVDADFEEVKDDK) is disordered. The segment covering 599–611 (VVDADFEEVKDDK) has biased composition (acidic residues).

The protein belongs to the heat shock protein 70 family.

Its function is as follows. Acts as a chaperone. The protein is Chaperone protein DnaK of Lysinibacillus sphaericus (strain C3-41).